We begin with the raw amino-acid sequence, 369 residues long: Phospho-N-acetylmuramoyl-pentapeptide-transferase (369 aa).

10 helical membrane passes run 2 to 22 (IALL…TPLF), 55 to 75 (TVVV…MWMM), 86 to 106 (GLLL…DDFI), 120 to 140 (AKLI…LQFP), 163 to 183 (LAFG…NLII), 196 to 216 (LDGL…IMGI), 239 to 259 (PMDL…FLWW), 266 to 286 (IFMG…FAIL), 291 to 311 (LLLA…IIQV), and 348 to 368 (ILAG…WVVL).

Belongs to the glycosyltransferase 4 family. MraY subfamily. Requires Mg(2+) as cofactor.

The protein localises to the cell membrane. The catalysed reaction is UDP-N-acetyl-alpha-D-muramoyl-L-alanyl-gamma-D-glutamyl-meso-2,6-diaminopimeloyl-D-alanyl-D-alanine + di-trans,octa-cis-undecaprenyl phosphate = di-trans,octa-cis-undecaprenyl diphospho-N-acetyl-alpha-D-muramoyl-L-alanyl-D-glutamyl-meso-2,6-diaminopimeloyl-D-alanyl-D-alanine + UMP. It functions in the pathway cell wall biogenesis; peptidoglycan biosynthesis. Catalyzes the initial step of the lipid cycle reactions in the biosynthesis of the cell wall peptidoglycan: transfers peptidoglycan precursor phospho-MurNAc-pentapeptide from UDP-MurNAc-pentapeptide onto the lipid carrier undecaprenyl phosphate, yielding undecaprenyl-pyrophosphoryl-MurNAc-pentapeptide, known as lipid I. In Paenarthrobacter aurescens (strain TC1), this protein is Phospho-N-acetylmuramoyl-pentapeptide-transferase.